We begin with the raw amino-acid sequence, 174 residues long: Glutaredoxin-C5, chloroplastic (174 aa).

The N-terminal 51 residues, 1–51 (MAVTAFNTLKLVSSSLDPIPSVSCSSYSFSLIYVGSPYKRCLKQSCSVRAM), are a transit peptide targeting the chloroplast. An N-acetylthreonine modification is found at threonine 52. At cysteine 90 the chain carries S-glutathionyl cysteine; partial. An intrachain disulfide couples cysteine 90 to cysteine 93. The region spanning 93 to 171 (CTEVKTLFKR…LMLAEANGKN (79 aa)) is the Glutaredoxin domain. Valine 135, cysteine 148, and threonine 149 together coordinate glutathione. Cysteine 148 is modified (S-glutathionyl cysteine; partial).

This sequence belongs to the glutaredoxin family. CPYC subfamily. As to quaternary structure, monomeric apoprotein and homodimeric holoprotein containing a [2Fe-2S] cluster. No in vitro interactions with SUFE1, BOLA1, BOLA2 or BOLA4. Post-translationally, glutathionylated.

It is found in the plastid. Its subcellular location is the chloroplast. In terms of biological role, has a glutathione-disulfide oxidoreductase activity in the presence of NADPH and glutathione reductase. Reduces low molecular weight disulfides and proteins. Can assemble a [2Fe-2S] cluster, but cannot transfer it to an apoferredoxin. In Arabidopsis thaliana (Mouse-ear cress), this protein is Glutaredoxin-C5, chloroplastic.